The primary structure comprises 845 residues: Beta-mannosidase B (845 aa).

Residue Glu-432 is the Proton donor of the active site. N-linked (GlcNAc...) asparagine glycosylation is found at Asn-717 and Asn-723.

Belongs to the glycosyl hydrolase 2 family. Beta-mannosidase B subfamily.

The enzyme catalyses Hydrolysis of terminal, non-reducing beta-D-mannose residues in beta-D-mannosides.. The protein operates within glycan metabolism; N-glycan degradation. Exoglycosidase that cleaves the single beta-linked mannose residue from the non-reducing end of beta-mannosidic oligosaccharides of various complexity and length. Prefers mannobiose over mannotriose and has no activity against polymeric mannan. Is also severely restricted by galactosyl substitutions at the +1 subsite. This chain is Beta-mannosidase B (mndB), found in Aspergillus clavatus (strain ATCC 1007 / CBS 513.65 / DSM 816 / NCTC 3887 / NRRL 1 / QM 1276 / 107).